The chain runs to 408 residues: Eukaryotic initiation factor 4A-II (408 aa).

A disordered region spans residues 1-22 (MSGGSADYNSREHGGPEGMDPD). A Q motif motif is present at residues 34 to 62 (DNFDDMNLKESLLRGIYAYGFEKPSAIQQ). The region spanning 65-236 (IIPCIKGYDV…KKFMRDPIRI (172 aa)) is the Helicase ATP-binding domain. 77 to 84 (QAQSGTGK) serves as a coordination point for ATP. Residue T160 is modified to Phosphothreonine. A DEAD box motif is present at residues 183–186 (LDEA). A Helicase C-terminal domain is found at 247 to 408 (GIKQFYINVE…EMPMNVADLI (162 aa)).

Belongs to the DEAD box helicase family. eIF4A subfamily. In terms of assembly, eIF4F is a multi-subunit complex, the composition of which varies with external and internal environmental conditions. It is composed of at least EIF4A, EIF4E and EIF4G1/EIFFG3. Interacts with EIF4E. May interact with NOM1.

It carries out the reaction ATP + H2O = ADP + phosphate + H(+). ATP-dependent RNA helicase which is a subunit of the eIF4F complex involved in cap recognition and is required for mRNA binding to ribosome. In the current model of translation initiation, eIF4A unwinds RNA secondary structures in the 5'-UTR of mRNAs which is necessary to allow efficient binding of the small ribosomal subunit, and subsequent scanning for the initiator codon. The chain is Eukaryotic initiation factor 4A-II (EIF4A2) from Macaca fascicularis (Crab-eating macaque).